Reading from the N-terminus, the 367-residue chain is Embryonic developmental protein tofu-6 (367 aa).

An RRM domain is found at 13-92; that stretch reads AGFHIRNIPK…FTLKVTDHKN (80 aa). The required for ife-3 interaction stretch occupies residues 298-345; sequence KSILADRLQRKGVCEYLPRSQQPHYAYSRETLLQHNNSGVTAQISNDA.

Component of the pid-1 variant of the PETISCO complex (also called the pid-3, erh-2, tofu-6, and ife-3 small RNA complex) containing at least pid-1, tofu-6, ife-3, pid-3, and erh-2, which is required for the biogenesis of 21 nucleotide PIWI-interacting RNAs (piRNAs) that possess a uracil residue at the 5'-end (also called 21U-RNAs). Within the pid-1 variant of the PETISCO complex interacts with pid-1. Component of the tost-1 variant of the PETISCO complex (also called the pid-3, erh-2, tofu-6, and ife-3 small RNA complex) containing at least tost-1, tofu-6, ife-3, pid-3, and erh-2, which plays an essential role in embryogenesis. Within the tost-1 variant of the PETISCO complex interacts with tost-1. Within the pid-1 and tost-1 variants of the PETISCO complexes interacts (via C-terminus) with ife-3. Within the pid-1 and tost-1 variants of the PETISCO complexes interacts (via the RRM domain) with pid-3. Within the pid-1 and tost-1 variants of the PETISCO complexes interacts (via the RRM domain) with erh-2. In contrast to the pid-1 variant of the PETISCO complex, the tost-1 variant of the PETISCO complex plays a minor role in the biogenesis of 21U-RNAs. Interacts (via residues 120-314) with the PUCH complex subunit tofu-1 (via residues 82-172); the interaction between the PETISCO and PUCH complex members enhances piRNA production in vivo. Expression is restricted to the germline (at protein level).

It is found in the cytoplasm. Its subcellular location is the perinuclear region. It localises to the nucleus. Its function is as follows. Component of the pid-1 and tost-1 variants of the PETISCO complexes, which have roles in the biogenesis of a class of 21 nucleotide PIWI-interacting RNAs (piRNAs) that possess a uracil residue at the 5'-end (also called 21U-RNAs) and embryogenesis, respectively. Promotes the biogenesis of 21U-RNAs. Mediates the interaction between the PETISCO complex and the PUCH complex, the endoribonuclease complex processing the 5'-end of precursor piRNAs, thereby enhancing mature piRNA production. Required for chromosome segregation and cell division in early embryos. May have a role in DNA replication. The sequence is that of Embryonic developmental protein tofu-6 from Caenorhabditis elegans.